The sequence spans 145 residues: UI (145 aa).

The N-terminal stretch at Met-1–Ser-22 is a signal peptide. Valine amide is present on Val-143.

It belongs to the sauvagine/corticotropin-releasing factor/urotensin I family.

It localises to the secreted. Urotensin is found in the teleost caudal neurosecretory system. It has a suggested role in osmoregulation and as a corticotropin-releasing factor. The non-hormonal portion of this precursor may be a urotensin binding protein, urophysin. In Carassius auratus (Goldfish), this protein is UI.